The chain runs to 299 residues: 33 kDa chaperonin (299 aa).

2 disulfides stabilise this stretch: cysteine 239–cysteine 241 and cysteine 272–cysteine 275.

Belongs to the HSP33 family. Post-translationally, under oxidizing conditions two disulfide bonds are formed involving the reactive cysteines. Under reducing conditions zinc is bound to the reactive cysteines and the protein is inactive.

The protein resides in the cytoplasm. Its function is as follows. Redox regulated molecular chaperone. Protects both thermally unfolding and oxidatively damaged proteins from irreversible aggregation. Plays an important role in the bacterial defense system toward oxidative stress. This Acaryochloris marina (strain MBIC 11017) protein is 33 kDa chaperonin.